The primary structure comprises 370 residues: MPLQAPDIRSAKRLVVKIGSALLVDGEGLRRQWLSALALDVAEARTRGTQVILVSSGSIALGRRVLHLPPGPLALEQSQAAAAVGQIRLARAYEEVLAPHGITTAQVLVTLEDTEDRRRYLNSRATMETLLGLGTVPIVNENDTVATDEIRFGDNDRLAAQIAVTVGADQLVLLSDVDGFYSANPKEDPTAERFDLVETITPALEAMAGDPVSGLSKGGMKTKIMAAKTAVAGGCAMAITEGSAMRPLKALEQGAARTWFVAQGDPQAARKRWINAMKPRGTIRVDAGAVQALQAGKSLLPAGVVAVEGNFGRGDPVEIAGPMGEVLGRGLTRYTAVEAVQIAGHRSAEIVAILGYSGRAALIHRDDMVI.

An ATP-binding site is contributed by K17. 3 residues coordinate substrate: S56, D143, and N155. ATP is bound at residue S175–D176. Residues R280–S357 enclose the PUA domain.

The protein belongs to the glutamate 5-kinase family.

Its subcellular location is the cytoplasm. It catalyses the reaction L-glutamate + ATP = L-glutamyl 5-phosphate + ADP. Its pathway is amino-acid biosynthesis; L-proline biosynthesis; L-glutamate 5-semialdehyde from L-glutamate: step 1/2. Functionally, catalyzes the transfer of a phosphate group to glutamate to form L-glutamate 5-phosphate. The chain is Glutamate 5-kinase from Cereibacter sphaeroides (strain ATCC 17023 / DSM 158 / JCM 6121 / CCUG 31486 / LMG 2827 / NBRC 12203 / NCIMB 8253 / ATH 2.4.1.) (Rhodobacter sphaeroides).